Reading from the N-terminus, the 545-residue chain is CTP synthase (545 aa).

Positions 1 to 266 (MTTNYIFVTG…DDYICKRFSL (266 aa)) are amidoligase domain. Ser-14 contacts CTP. Ser-14 contributes to the UTP binding site. Residues 15–20 (SLGKGI) and Asp-72 contribute to the ATP site. Asp-72 and Glu-140 together coordinate Mg(2+). Residues 147–149 (DIE), 187–192 (KTKPTQ), and Lys-223 each bind CTP. UTP contacts are provided by residues 187–192 (KTKPTQ) and Lys-223. Residue 239–241 (KDV) coordinates ATP. One can recognise a Glutamine amidotransferase type-1 domain in the interval 291 to 542 (TIGMIGKYVE…VKAAGDYQKR (252 aa)). Gly-352 contacts L-glutamine. Cys-379 acts as the Nucleophile; for glutamine hydrolysis in catalysis. L-glutamine-binding positions include 380–383 (LGMQ), Glu-403, and Arg-470. Catalysis depends on residues His-515 and Glu-517.

This sequence belongs to the CTP synthase family. As to quaternary structure, homotetramer.

The enzyme catalyses UTP + L-glutamine + ATP + H2O = CTP + L-glutamate + ADP + phosphate + 2 H(+). It catalyses the reaction L-glutamine + H2O = L-glutamate + NH4(+). The catalysed reaction is UTP + NH4(+) + ATP = CTP + ADP + phosphate + 2 H(+). It participates in pyrimidine metabolism; CTP biosynthesis via de novo pathway; CTP from UDP: step 2/2. Allosterically activated by GTP, when glutamine is the substrate; GTP has no effect on the reaction when ammonia is the substrate. The allosteric effector GTP functions by stabilizing the protein conformation that binds the tetrahedral intermediate(s) formed during glutamine hydrolysis. Inhibited by the product CTP, via allosteric rather than competitive inhibition. Functionally, catalyzes the ATP-dependent amination of UTP to CTP with either L-glutamine or ammonia as the source of nitrogen. Regulates intracellular CTP levels through interactions with the four ribonucleotide triphosphates. In Yersinia pseudotuberculosis serotype O:1b (strain IP 31758), this protein is CTP synthase.